Here is a 524-residue protein sequence, read N- to C-terminus: Cytochrome P450 monooxygenase ankB (524 aa).

The chain crosses the membrane as a helical span at residues F22 to F42. C466 lines the heme pocket.

This sequence belongs to the cytochrome P450 family. Requires heme as cofactor.

The protein resides in the membrane. It carries out the reaction cyclo(L-arginyl-tyrosyl) + reduced [NADPH--hemoprotein reductase] + O2 = cyclo(L-arginyl-L-dehydrotyrosyl) + oxidized [NADPH--hemoprotein reductase] + 2 H2O + H(+). The protein operates within alkaloid biosynthesis. Cytochrome P450 monooxygenase; part of the ank cluster that mediates the biosynthesis of NK13650 C, a highly modified cyclo-arginine-tyrosine dipeptide. AnkB is responsible for desaturation of the ankA product cyclo-Arg-Tyr diketopiperazine, likely through hydroxylation of the benzylic position followed by dehydration to yield a dehydro-cyclodipeptide. Within the pathway, the cyclodipeptide synthase ankA acts as the scaffold-generating enzyme and is responsible for formation of the cyclo-Arg-Tyr diketopiperazine (cRY) from L-Arg and L-Tyr. The ankA product cRY is desaturated by the cytochrome P450 monooxygenase ankB to yield a dehydro-cyclodipeptide intermediate. The FAD-dependent monooxygenase ankC then installs the m-OH, ankD catalyzes the attachment of L-homoserine, and ankE ligates citrate to the ankD product to yield NK13650 B. The O-methyltransferase ankF is responsible for methylation of the C-17 phenol group of NK13650 B to produce NK13650 D. Amidation of NK13650 D with L-Asp by ankG then leads to the production of NK13650 C, whereas amidation of NK13650 B produces NK13650 A. In Aspergillus thermomutatus (Neosartorya pseudofischeri), this protein is Cytochrome P450 monooxygenase ankB.